The following is a 325-amino-acid chain: Probable siderophore-binding lipoprotein YfiY (325 aa).

Residues 1–20 (MKKHISMLFVFLMAVMVLSA) form the signal peptide. Residue cysteine 21 is the site of N-palmitoyl cysteine attachment. Cysteine 21 carries the S-diacylglycerol cysteine lipid modification. The region spanning 56–325 (RIVVLTNEGT…DIETYFLKTK (270 aa)) is the Fe/B12 periplasmic-binding domain. Serine 290 carries the post-translational modification Phosphoserine. At threonine 302 the chain carries Phosphothreonine.

It belongs to the bacterial solute-binding protein 8 family. The complex is composed of one ATP-binding protein (YusV), two transmembrane proteins (YfiZ and YfhA) and a solute-binding protein (YfiY). Interacts with FloT.

The protein resides in the cell membrane. It localises to the cytoplasm. The protein localises to the membrane raft. In terms of biological role, part of the ABC transporter complex YfiYZ/YfhA/YusV involved in import of the iron-hydroxamate siderophores schizokinen, arthrobactin and corprogen. Binds the siderophores and delivers them to the surface of YfiZ/YfhA. The sequence is that of Probable siderophore-binding lipoprotein YfiY (yfiY) from Bacillus subtilis (strain 168).